Reading from the N-terminus, the 337-residue chain is Tetraacyldisaccharide 4'-kinase (337 aa).

ATP is bound at residue 55–62 (TIGGNGKT).

Belongs to the LpxK family.

It catalyses the reaction a lipid A disaccharide + ATP = a lipid IVA + ADP + H(+). Its pathway is glycolipid biosynthesis; lipid IV(A) biosynthesis; lipid IV(A) from (3R)-3-hydroxytetradecanoyl-[acyl-carrier-protein] and UDP-N-acetyl-alpha-D-glucosamine: step 6/6. In terms of biological role, transfers the gamma-phosphate of ATP to the 4'-position of a tetraacyldisaccharide 1-phosphate intermediate (termed DS-1-P) to form tetraacyldisaccharide 1,4'-bis-phosphate (lipid IVA). The polypeptide is Tetraacyldisaccharide 4'-kinase (Blochmanniella pennsylvanica (strain BPEN)).